A 746-amino-acid chain; its full sequence is NAD(P)H-quinone oxidoreductase subunit 5, chloroplastic (746 aa).

Transmembrane regions (helical) follow at residues 9–29, 40–60, 88–108, 125–145, 147–167, 185–205, 225–245, 258–278, 283–303, 327–347, 354–374, 396–416, 425–445, 554–574, 610–630, and 726–746; these read YIILFLPLPVTMSIGFGLLFV, WAFVSVLLLSMVMGFSVNLAI, LIDPLTSIMSLLISTVGIMVL, FAYMSFFNTSMLGLVTSSNLI, IHIFWELVGMCSYLLIGFWFT, GDFGLLLGILGFYWITGSLEF, FAILCACLLFLGAVAKSAQFP, TPISALIHAATMVAAGIFLVA, LFIVIPYIMNLISLIGIITLL, LGYIMLALGIGSYRAALFHLI, ALLFLGSGSIIHSMEPVVGYS, TTFLLGTLSLCGIPPLACFWS, WLYSPIFAIIAYFTAGLTAFY, LFPLLVLVLFTLVVGLIGIPF, IFSVSVSLFGLFIASIFYGSV, and YLFLYLSYVSIFLIFYQYFDF.

This sequence belongs to the complex I subunit 5 family. As to quaternary structure, NDH is composed of at least 16 different subunits, 5 of which are encoded in the nucleus.

Its subcellular location is the plastid. The protein resides in the chloroplast thylakoid membrane. It carries out the reaction a plastoquinone + NADH + (n+1) H(+)(in) = a plastoquinol + NAD(+) + n H(+)(out). It catalyses the reaction a plastoquinone + NADPH + (n+1) H(+)(in) = a plastoquinol + NADP(+) + n H(+)(out). Its function is as follows. NDH shuttles electrons from NAD(P)H:plastoquinone, via FMN and iron-sulfur (Fe-S) centers, to quinones in the photosynthetic chain and possibly in a chloroplast respiratory chain. The immediate electron acceptor for the enzyme in this species is believed to be plastoquinone. Couples the redox reaction to proton translocation, and thus conserves the redox energy in a proton gradient. The polypeptide is NAD(P)H-quinone oxidoreductase subunit 5, chloroplastic (ndhF) (Dioscorea elephantipes (Elephant's foot yam)).